A 158-amino-acid polypeptide reads, in one-letter code: NADH-quinone oxidoreductase subunit B (158 aa).

Cys37, Cys38, Cys102, and Cys132 together coordinate [4Fe-4S] cluster.

It belongs to the complex I 20 kDa subunit family. NDH-1 is composed of 14 different subunits. Subunits NuoB, C, D, E, F, and G constitute the peripheral sector of the complex. It depends on [4Fe-4S] cluster as a cofactor.

Its subcellular location is the cell inner membrane. It carries out the reaction a quinone + NADH + 5 H(+)(in) = a quinol + NAD(+) + 4 H(+)(out). Its function is as follows. NDH-1 shuttles electrons from NADH, via FMN and iron-sulfur (Fe-S) centers, to quinones in the respiratory chain. The immediate electron acceptor for the enzyme in this species is believed to be ubiquinone. Couples the redox reaction to proton translocation (for every two electrons transferred, four hydrogen ions are translocated across the cytoplasmic membrane), and thus conserves the redox energy in a proton gradient. In Acidithiobacillus ferrooxidans (strain ATCC 23270 / DSM 14882 / CIP 104768 / NCIMB 8455) (Ferrobacillus ferrooxidans (strain ATCC 23270)), this protein is NADH-quinone oxidoreductase subunit B.